The primary structure comprises 592 residues: Isocitrate dehydrogenase kinase/phosphatase 1 (592 aa).

ATP contacts are provided by residues 337-343 and K358; that span reads APGTPGM. The active site involves D393.

It belongs to the AceK family.

The protein localises to the cytoplasm. The catalysed reaction is L-seryl-[isocitrate dehydrogenase] + ATP = O-phospho-L-seryl-[isocitrate dehydrogenase] + ADP + H(+). Functionally, bifunctional enzyme which can phosphorylate or dephosphorylate isocitrate dehydrogenase (IDH) on a specific serine residue. This is a regulatory mechanism which enables bacteria to bypass the Krebs cycle via the glyoxylate shunt in response to the source of carbon. When bacteria are grown on glucose, IDH is fully active and unphosphorylated, but when grown on acetate or ethanol, the activity of IDH declines drastically concomitant with its phosphorylation. This Pseudoalteromonas translucida (strain TAC 125) protein is Isocitrate dehydrogenase kinase/phosphatase 1.